Consider the following 204-residue polypeptide: Guanylate kinase (204 aa).

Positions 3–181 (GTLYIVSASS…AVSEMSAIFT (179 aa)) constitute a Guanylate kinase-like domain. 10–17 (ASSGTGKS) serves as a coordination point for ATP.

This sequence belongs to the guanylate kinase family.

The protein localises to the cytoplasm. The enzyme catalyses GMP + ATP = GDP + ADP. Functionally, essential for recycling GMP and indirectly, cGMP. In Xylella fastidiosa (strain Temecula1 / ATCC 700964), this protein is Guanylate kinase.